A 208-amino-acid chain; its full sequence is Large ribosomal subunit protein uL4 (208 aa).

Positions 45–85 (RQGTHKAKTRAQVRGGGRKPYRQKGTGNARQGSTRSPLMIG) are disordered. Positions 46-66 (QGTHKAKTRAQVRGGGRKPYR) are enriched in basic residues. Residues 69 to 80 (GTGNARQGSTRS) are compositionally biased toward polar residues.

Belongs to the universal ribosomal protein uL4 family. Part of the 50S ribosomal subunit.

One of the primary rRNA binding proteins, this protein initially binds near the 5'-end of the 23S rRNA. It is important during the early stages of 50S assembly. It makes multiple contacts with different domains of the 23S rRNA in the assembled 50S subunit and ribosome. In terms of biological role, forms part of the polypeptide exit tunnel. This Chlorobium phaeobacteroides (strain DSM 266 / SMG 266 / 2430) protein is Large ribosomal subunit protein uL4.